Here is a 584-residue protein sequence, read N- to C-terminus: Protein disulfide-isomerase-like protein of the testis (584 aa).

An N-terminal signal peptide occupies residues 1-20 (MDLLWMPLLLVAACVSAVHS). N-linked (GlcNAc...) asparagine glycans are attached at residues asparagine 58, asparagine 128, asparagine 160, and asparagine 340. The Thioredoxin domain maps to 388 to 451 (LVKQLVGKNF…IAKIDVTAND (64 aa)). Asparagine 540 carries an N-linked (GlcNAc...) asparagine glycan. The Prevents secretion from ER motif lies at 581 to 584 (KEEL).

Belongs to the protein disulfide isomerase family. In terms of assembly, homodimer. The homodimer is not disulfide-linked. Interacts with ERO1A and CLGN. Post-translationally, N-glycosylated. As to expression, testis-specific.

The protein resides in the endoplasmic reticulum. Functionally, probable redox-inactive chaperone involved in spermatogenesis. The polypeptide is Protein disulfide-isomerase-like protein of the testis (PDILT) (Homo sapiens (Human)).